The following is a 243-amino-acid chain: GTP cyclohydrolase 1 (243 aa).

T15 is modified (phosphothreonine). The segment at 18-55 (NIRPTSPYTLNPPVERDGFSWPSVGTRQRAEETEEEEK) is disordered. S23 carries the phosphoserine modification. C132, H135, and C203 together coordinate Zn(2+).

This sequence belongs to the GTP cyclohydrolase I family. As to quaternary structure, homodimer.

It carries out the reaction GTP + H2O = 7,8-dihydroneopterin 3'-triphosphate + formate + H(+). The protein operates within cofactor biosynthesis; 7,8-dihydroneopterin triphosphate biosynthesis; 7,8-dihydroneopterin triphosphate from GTP: step 1/1. Its function is as follows. GTP cyclohydrolase 1 is the first enzyme in the biosynthetic pathway leading to folic acid. This is GTP cyclohydrolase 1 from Saccharomyces cerevisiae (strain ATCC 204508 / S288c) (Baker's yeast).